The primary structure comprises 319 residues: Tyrosine--tRNA ligase (319 aa).

Tyr35 is a binding site for L-tyrosine. The 'HIGH' region motif lies at 40–48 (PSGKIHLGH). The L-tyrosine site is built by Tyr156, Gln160, Asp163, and Gln178. The short motif at 213 to 217 (KMSSS) is the 'KMSKS' region element. Ser216 is a binding site for ATP.

This sequence belongs to the class-I aminoacyl-tRNA synthetase family. TyrS type 3 subfamily. As to quaternary structure, homodimer.

It is found in the cytoplasm. The enzyme catalyses tRNA(Tyr) + L-tyrosine + ATP = L-tyrosyl-tRNA(Tyr) + AMP + diphosphate + H(+). Catalyzes the attachment of tyrosine to tRNA(Tyr) in a two-step reaction: tyrosine is first activated by ATP to form Tyr-AMP and then transferred to the acceptor end of tRNA(Tyr). The chain is Tyrosine--tRNA ligase from Methanobrevibacter smithii (strain ATCC 35061 / DSM 861 / OCM 144 / PS).